Consider the following 357-residue polypeptide: 3-isopropylmalate dehydrogenase (357 aa).

Positions 97, 107, 135, and 224 each coordinate substrate. Mg(2+)-binding residues include D224, D248, and D252. 282-294 contacts NAD(+); that stretch reads GSAPDIAGQDLAN.

This sequence belongs to the isocitrate and isopropylmalate dehydrogenases family. LeuB type 1 subfamily. In terms of assembly, homodimer. It depends on Mg(2+) as a cofactor. Requires Mn(2+) as cofactor.

It localises to the cytoplasm. It catalyses the reaction (2R,3S)-3-isopropylmalate + NAD(+) = 4-methyl-2-oxopentanoate + CO2 + NADH. It functions in the pathway amino-acid biosynthesis; L-leucine biosynthesis; L-leucine from 3-methyl-2-oxobutanoate: step 3/4. Functionally, catalyzes the oxidation of 3-carboxy-2-hydroxy-4-methylpentanoate (3-isopropylmalate) to 3-carboxy-4-methyl-2-oxopentanoate. The product decarboxylates to 4-methyl-2 oxopentanoate. The protein is 3-isopropylmalate dehydrogenase of Prochlorococcus marinus (strain MIT 9313).